We begin with the raw amino-acid sequence, 1023 residues long: RTX-I toxin determinant A from serotypes 1/9 (1023 aa).

The next 3 membrane-spanning stretches (helical) occupy residues 226–256 (NNLP…ILSN), 297–326 (STTA…ADKF), and 367–406 (INSV…SGIL). 6 Hemolysin-type calcium-binding repeats span residues 730–747 (FGSR…DDEI), 748–765 (YGND…NDVI), 766–783 (HGGD…NDRL), 784–801 (IGGK…DDEL), 812–829 (LGGA…TNLF), and 830–847 (DGGV…KDIY).

This sequence belongs to the RTX prokaryotic toxin (TC 1.C.11) family. In terms of processing, palmitoylated by ApxIC. The toxin only becomes active when modified.

It is found in the secreted. The protein localises to the host cell membrane. Its function is as follows. One of the virulence factors of A.pleuropneumoniae, which has a strong hemolytic activity and is cytotoxic for alveolar macrophages and neutrophils. This Actinobacillus pleuropneumoniae (Haemophilus pleuropneumoniae) protein is RTX-I toxin determinant A from serotypes 1/9 (apxIA).